A 243-amino-acid polypeptide reads, in one-letter code: Probable aquaporin SIP1-2 (243 aa).

A run of 2 helical transmembrane segments spans residues 12–32 (VITFLWVILSATFGIQTAAIV) and 42–62 (WAPLVISTLVVFVSISIFTVI). The short motif at 72-74 (NPC) is the NPA 1 element. Helical transmembrane passes span 90–110 (FSLAIRSPAQAIGAAGGAITI), 135–155 (GAISEVVLSFSVTFLVLLIIL), and 162–182 (LAKTFLLALATVSVFVVGSKF). The NPA 2 signature appears at 188–190 (NPA). A helical transmembrane segment spans residues 210 to 230 (VYWISSYTGAILSAMLFRIIF).

It belongs to the MIP/aquaporin (TC 1.A.8) family. SIP (TC 1.A.8.10) subfamily. As to expression, expressed in roots and above ground. Expressed in elongating regions of the root tips, cotyledons, minor veins and hydathode cells of the rosette leaves. Weakly expressed in vascular tissues of the flower petals, filaments of stamens, upper part of the styles and receptacles of the siliques.

The protein resides in the endoplasmic reticulum membrane. Water channel required to facilitate the transport of water across cell membrane. The chain is Probable aquaporin SIP1-2 (SIP1-2) from Arabidopsis thaliana (Mouse-ear cress).